A 206-amino-acid polypeptide reads, in one-letter code: Cytochrome c biogenesis ATP-binding export protein CcmA (206 aa).

The ABC transporter domain occupies 2–206 (LEARDVVCIR…IQLTPSEGTP (205 aa)). 34–41 (GANGVGKT) contributes to the ATP binding site.

It belongs to the ABC transporter superfamily. CcmA exporter (TC 3.A.1.107) family. As to quaternary structure, the complex is composed of two ATP-binding proteins (CcmA) and two transmembrane proteins (CcmB).

Its subcellular location is the cell inner membrane. It catalyses the reaction heme b(in) + ATP + H2O = heme b(out) + ADP + phosphate + H(+). In terms of biological role, part of the ABC transporter complex CcmAB involved in the biogenesis of c-type cytochromes; once thought to export heme, this seems not to be the case, but its exact role is uncertain. Responsible for energy coupling to the transport system. The sequence is that of Cytochrome c biogenesis ATP-binding export protein CcmA from Pectobacterium atrosepticum (strain SCRI 1043 / ATCC BAA-672) (Erwinia carotovora subsp. atroseptica).